Consider the following 499-residue polypeptide: 2,3-bisphosphoglycerate-independent phosphoglycerate mutase (499 aa).

D10 and S60 together coordinate Mn(2+). S60 (phosphoserine intermediate) is an active-site residue. Residues H121, 151–152 (RD), R182, R188, 253–256 (RPDR), and K326 contribute to the substrate site. Residues D391, H395, D434, H435, and H452 each contribute to the Mn(2+) site.

It belongs to the BPG-independent phosphoglycerate mutase family. As to quaternary structure, monomer. It depends on Mn(2+) as a cofactor.

It carries out the reaction (2R)-2-phosphoglycerate = (2R)-3-phosphoglycerate. Its pathway is carbohydrate degradation; glycolysis; pyruvate from D-glyceraldehyde 3-phosphate: step 3/5. In terms of biological role, catalyzes the interconversion of 2-phosphoglycerate and 3-phosphoglycerate. The sequence is that of 2,3-bisphosphoglycerate-independent phosphoglycerate mutase from Metamycoplasma hominis (strain ATCC 23114 / DSM 25592 / NBRC 14850 / NCTC 10111 / PG21) (Mycoplasma hominis).